The following is an 898-amino-acid chain: Serine/threonine-protein kinase TAO3 (898 aa).

In terms of domain architecture, Protein kinase spans 24–277 (FIGLHEIGHG…SAELLRHDFV (254 aa)). ATP is bound by residues 30 to 38 (IGHGSFGAV) and K53. The active-site Proton acceptor is the D147. Disordered regions lie at residues 316-362 (TRNG…SQSS) and 405-425 (DEAG…VQSQ). Phosphoserine; by ATM is present on S324. Residues S331, S343, S346, and S349 each carry the phosphoserine modification. Residues 334-351 (GTSLNREMDSLGSNHSIP) show a composition bias toward polar residues. The span at 352–362 (SMSVSTGSQSS) shows a compositional bias: low complexity. T357 carries the post-translational modification Phosphothreonine. Position 359 is a phosphoserine (S359). A compositionally biased stretch (basic and acidic residues) spans 405-416 (DEAGHGDPRPEP). At S442 the chain carries Phosphoserine. Coiled coils occupy residues 452–502 (EQEN…THAN), 548–649 (FLES…HAML), and 754–879 (LKTL…DMES). The interval 565-596 (EEMNEDHSTPKKEKQERISKHKENLQHTQAEE) is disordered. N6-acetyllysine is present on K830.

Belongs to the protein kinase superfamily. STE Ser/Thr protein kinase family. STE20 subfamily. Self-associates. Interacts with ERN1 and TRAF2. Interaction with TRAF2 is facilitated under ER stress conditions, such as treatment with tunicamycin, and may promote TRAF2 phosphorylation. Interacts (via N-terminus) with STK25; the interaction promotes STK25 abundance at the level of protein expression and/or stability. As to quaternary structure, (Microbial infection) Interacts with herpes simplex virus 1 UL37 protein. Post-translationally, autophosphorylated. Phosphorylation at Ser-324 by ATM following DNA damage is required for activation of the p38/MAPK14 stress-activated MAPK cascade. Phosphorylated at Ser-324 and on Tyr residues during T cell activation. Phosphorylated by LRRK2. Ubiquitously expressed at a low level, and highly expressed in peripheral blood leukocytes (PBLs), thymus, spleen, kidney, skeletal muscle, heart and liver.

Its subcellular location is the cytoplasm. It localises to the cell membrane. The protein localises to the membrane raft. It is found in the lipid droplet. It catalyses the reaction L-seryl-[protein] + ATP = O-phospho-L-seryl-[protein] + ADP + H(+). The enzyme catalyses L-threonyl-[protein] + ATP = O-phospho-L-threonyl-[protein] + ADP + H(+). In terms of biological role, serine/threonine-protein kinase that acts as a regulator of the p38/MAPK14 stress-activated MAPK cascade and of the MAPK8/JNK cascade. In response to DNA damage, involved in the G2/M transition DNA damage checkpoint by activating the p38/MAPK14 stress-activated MAPK cascade, probably by mediating phosphorylation of upstream MAP2K3 and MAP2K6 kinases. Inhibits basal activity of the MAPK8/JNK cascade and diminishes its activation in response to epidermal growth factor (EGF). Positively regulates canonical T cell receptor (TCR) signaling by preventing early PTPN6/SHP1-mediated inactivation of LCK, ensuring sustained TCR signaling that is required for optimal activation and differentiation of T cells. Phosphorylates PTPN6/SHP1 on 'Thr-394', leading to its polyubiquitination and subsequent proteasomal degradation. Required for cell surface expression of metalloprotease ADAM10 on type 1 transitional B cells which is necessary for their NOTCH-mediated development into marginal zone B cells. Also required for the NOTCH-mediated terminal differentiation of splenic conventional type 2 dendritic cells. Positively regulates osteoblast differentiation by acting as an upstream activator of the JNK pathway. Promotes JNK signaling in hepatocytes and positively regulates hepatocyte lipid storage by inhibiting beta-oxidation and triacylglycerol secretion while enhancing lipid synthesis. Restricts age-associated inflammation by negatively regulating differentiation of macrophages and their production of pro-inflammatory cytokines. Plays a role in negatively regulating the abundance of regulatory T cells in white adipose tissue. This chain is Serine/threonine-protein kinase TAO3 (TAOK3), found in Homo sapiens (Human).